Here is a 251-residue protein sequence, read N- to C-terminus: Segregation and condensation protein A (251 aa).

It belongs to the ScpA family. In terms of assembly, component of a cohesin-like complex composed of ScpA, ScpB and the Smc homodimer, in which ScpA and ScpB bind to the head domain of Smc. The presence of the three proteins is required for the association of the complex with DNA.

Its subcellular location is the cytoplasm. Functionally, participates in chromosomal partition during cell division. May act via the formation of a condensin-like complex containing Smc and ScpB that pull DNA away from mid-cell into both cell halves. In Clostridium botulinum (strain Alaska E43 / Type E3), this protein is Segregation and condensation protein A.